Consider the following 161-residue polypeptide: Nucleotide-binding protein Gmet_3206 (161 aa).

Belongs to the YajQ family.

In terms of biological role, nucleotide-binding protein. In Geobacter metallireducens (strain ATCC 53774 / DSM 7210 / GS-15), this protein is Nucleotide-binding protein Gmet_3206.